The primary structure comprises 1507 residues: Lhr helicase/ probable uracil glycosylase (1507 aa).

Positions 1-856 (MTTNGADPLG…ASLLFGYVGA (856 aa)) are lhr-Core. Phenylalanine 24, glutamine 31, lysine 54, and threonine 55 together coordinate ATP. A Helicase ATP-binding domain is found at 35 to 226 (WSAISEGNNT…FLSGQAPTTI (192 aa)). Positions 122, 131, 145, 148, and 152 each coordinate ssDNA. 2 residues coordinate ATP: aspartate 170 and glutamate 171. The DEAH box signature appears at 170–173 (DEVH). The ssDNA site is built by serine 253, tryptophan 255, and arginine 279. The region spanning 257-451 (DVEERIVDLV…VLAQHTVAVA (195 aa)) is the Helicase C-terminal domain. ATP-binding residues include isoleucine 377, arginine 394, and histidine 397. Residues lysine 410, glutamine 518, arginine 519, isoleucine 528, tryptophan 597, aspartate 600, and arginine 777 each contribute to the ssDNA site. Residues 436–529 (PANPLDVLAQ…LAVTSGGAIP (94 aa)) form a WH domain region. The domain 4 stretch occupies residues 530–856 (DRGMFTVYLA…ASLLFGYVGA (327 aa)). The CTD stretch occupies residues 857–1507 (FMYEGDSPLA…SRTPRGLRLR (651 aa)).

This sequence belongs to the Lhr helicase family. As to quaternary structure, monomer. Homooligomerizes, possibly a homotetramer. It depends on Ca(2+) as a cofactor.

It catalyses the reaction Couples ATP hydrolysis with the unwinding of duplex DNA by translocating in the 3'-5' direction.. The enzyme catalyses ATP + H2O = ADP + phosphate + H(+). The catalysed reaction is Hydrolyzes single-stranded DNA or mismatched double-stranded DNA and polynucleotides, releasing free uracil.. Functionally, a 3'-5' helicase involved in repair of at least 3 types of DNA cross-links, mitomycin C (MMC), cisplatin, and psoralen-UVA. Translocates 3'-to-5' on single-stranded (ss)DNA, unwinding any encountered duplex nucleic acid. A 3'-ssDNA loading strand of at least 15 nucleotides is required for helicase activity. An RNA:DNA hybrid with a 3'-ssDNA loading strand is an 8-fold better helicase substrate than 3'-tailed double-stranded (ds)DNA; substrates where the helicase loads on a 3'-ssRNA tail (DNA:RNA and RNA:RNA) are not unwound. Only (d)ATP is hydrolyzed by the protein, which has no ATPase activity in the absence of ssDNA or ssRNA. Arg-279 and Trp-597 are needed to couple ATP hydrolysis to mechanical work; a salt bridge between Arg-280 and Glu-550 closes a clamp around the ssDNA that is not large enough for dsDNA, while Ile-528 wedges between bases of the loading strand. In terms of biological role, excises uracil residues from ssDNA. Uracil residues in DNA can arise as a result of misincorporation of dUMP residues by DNA polymerase or due to deamination of cytosine. The polypeptide is Lhr helicase/ probable uracil glycosylase (Mycolicibacterium smegmatis (strain ATCC 700084 / mc(2)155) (Mycobacterium smegmatis)).